Here is a 94-residue protein sequence, read N- to C-terminus: Enhancer of yellow 2 transcription factor (94 aa).

The protein belongs to the ENY2 family. As to quaternary structure, component of the nuclear pore complex (NPC)-associated AMEX complex (anchoring and mRNA export complex), composed of at least e(y)2 and xmas-2. Component of the SAGA transcription coactivator-HAT complexes, at least composed of Ada2b, e(y)2, Pcaf/Gcn5, Taf10 and Nipped-A/Trrap. Within the SAGA complex, e(y)2, Sgf11, and not/nonstop form an additional subcomplex of SAGA called the DUB module (deubiquitination module). Component of the THO complex, composed of at least e(y)2, HPR1, THO2, THOC5, THOC6 and THOC7. Interacts with e(y)1. Interacts with su(Hw) (via zinc fingers). Interacts with xmas-2; required for localization to the nuclear periphery. Interacts with the nuclear pore complex (NPC).

The protein localises to the nucleus. It localises to the nucleoplasm. Its subcellular location is the cytoplasm. Involved in mRNA export coupled transcription activation by association with both the AMEX and the SAGA complexes. The SAGA complex is a multiprotein complex that activates transcription by remodeling chromatin and mediating histone acetylation and deubiquitination. Within the SAGA complex, participates in a subcomplex that specifically deubiquitinates histone H2B. The SAGA complex is recruited to specific gene promoters by activators, where it is required for transcription. Required for nuclear receptor-mediated transactivation. Involved in transcription elongation by recruiting the THO complex onto nascent mRNA. The AMEX complex functions in docking export-competent ribonucleoprotein particles (mRNPs) to the nuclear entrance of the nuclear pore complex (nuclear basket). AMEX participates in mRNA export and accurate chromatin positioning in the nucleus by tethering genes to the nuclear periphery. This chain is Enhancer of yellow 2 transcription factor, found in Drosophila mojavensis (Fruit fly).